The sequence spans 422 residues: D-amino acid dehydrogenase (422 aa).

Position 3-17 (Val-3–Trp-17) interacts with FAD.

The protein belongs to the DadA oxidoreductase family. It depends on FAD as a cofactor.

It catalyses the reaction a D-alpha-amino acid + A + H2O = a 2-oxocarboxylate + AH2 + NH4(+). Its pathway is amino-acid degradation; D-alanine degradation; NH(3) and pyruvate from D-alanine: step 1/1. Its function is as follows. Oxidative deamination of D-amino acids. This is D-amino acid dehydrogenase from Paramagnetospirillum magneticum (strain ATCC 700264 / AMB-1) (Magnetospirillum magneticum).